We begin with the raw amino-acid sequence, 174 residues long: Shikimate kinase 2 (174 aa).

12-17 (GCGKTT) is an ATP binding site. Thr16 and Asp32 together coordinate Mg(2+). The substrate site is built by Asp34, Arg58, and Gly79. The tract at residues 112 to 126 (QAAPEEDLRPTLTGK) is LID domain. Residue Arg120 participates in ATP binding. Arg139 is a binding site for substrate.

Belongs to the shikimate kinase family. AroL subfamily. Monomer. The cofactor is Mg(2+).

Its subcellular location is the cytoplasm. The catalysed reaction is shikimate + ATP = 3-phosphoshikimate + ADP + H(+). It participates in metabolic intermediate biosynthesis; chorismate biosynthesis; chorismate from D-erythrose 4-phosphate and phosphoenolpyruvate: step 5/7. In terms of biological role, catalyzes the specific phosphorylation of the 3-hydroxyl group of shikimic acid using ATP as a cosubstrate. This is Shikimate kinase 2 from Escherichia coli O7:K1 (strain IAI39 / ExPEC).